Consider the following 419-residue polypeptide: MASIFSKLLTGRNASLLFATMGTSVLTTGYLLNRQKVCAEVREQPRLFPPSADYPDLRKHNNCMAECLTPAIYAKLRNKVTPNGYTLDQCIQTGVDNPGHPFIKTVGMVAGDEESYEVFADLFDPVIKLRHNGYDPRVMKHTTDLDASKITQGQFDEHYVLSSRVRTGRSIRGLSLPPACTRAERREVENVAITALEGLKGDLAGRYYKLSEMTEQDQQRLIDDHFLFDKPVSPLLTCAGMARDWPDARGIWHNYDKTFLIWINEEDHTRVISMEKGGNMKRVFERFCRGLKEVERLIQERGWEFMWNERLGYILTCPSNLGTGLRAGVHVRIPKLSKDPRFSKILENLRLQKRGTGGVDTAAVADVYDISNIDRIGRSEVELVQIVIDGVNYLVDCEKKLERGQDIKVPPPLPQFGKK.

Residues 1-39 constitute a mitochondrion transit peptide; that stretch reads MASIFSKLLTGRNASLLFATMGTSVLTTGYLLNRQKVCA. The tract at residues 40–64 is cardiolipin-binding; the sequence is EVREQPRLFPPSADYPDLRKHNNCM. In terms of domain architecture, Phosphagen kinase N-terminal spans 46-132; it reads RLFPPSADYP…FDPVIKLRHN (87 aa). The Phosphagen kinase C-terminal domain maps to 159 to 401; the sequence is YVLSSRVRTG…NYLVDCEKKL (243 aa). Residues 162–166 and His225 contribute to the ATP site; that span reads SSRVR. At Tyr255 the chain carries Phosphotyrosine. ATP-binding positions include Arg270, Arg326, 354-359, and Asp369; that span reads RGTGGV. Phosphothreonine is present on Thr356.

Belongs to the ATP:guanido phosphotransferase family. Exists as an octamer composed of four CKMT2 homodimers. As to expression, sarcomere-specific. Found only in heart and skeletal muscles.

It is found in the mitochondrion inner membrane. The catalysed reaction is creatine + ATP = N-phosphocreatine + ADP + H(+). In terms of biological role, reversibly catalyzes the transfer of phosphate between ATP and various phosphogens (e.g. creatine phosphate). Creatine kinase isoenzymes play a central role in energy transduction in tissues with large, fluctuating energy demands, such as skeletal muscle, heart, brain and spermatozoa. This Homo sapiens (Human) protein is Creatine kinase S-type, mitochondrial (CKMT2).